The sequence spans 333 residues: Multiheme cytochrome MtrA (333 aa).

The first 34 residues, 1 to 34 (MKNSLKMKNLLPALVITMAMSAVMSLCIAPNAYA), serve as a signal peptide directing secretion.

The protein is Multiheme cytochrome MtrA (mtrA) of Shewanella baltica (strain OS185).